We begin with the raw amino-acid sequence, 291 residues long: 11-beta-hydroxysteroid dehydrogenase 1 (291 aa).

The Cytoplasmic segment spans residues 1-7 (MAFMKTH). A helical; Signal-anchor for type II membrane protein membrane pass occupies residues 8 to 24 (LLPILGLFMAYYYYSAY). The Lumenal portion of the chain corresponds to 25 to 291 (EEFRPEMLQG…TSYSTDGLIN (267 aa)). Residues 41-67 (GASKGIGREMAYHLAKMGAHVVVTARS), 92-93 (TM), and 119-121 (NHI) each bind NADP(+). 2 N-linked (GlcNAc...) asparagine glycosylation sites follow: Asn123 and Asn162. Position 170 (Ser170) interacts with substrate. Catalysis depends on Tyr183, which acts as the Proton acceptor. 183–187 (YSASK) contributes to the NADP(+) binding site. A glycan (N-linked (GlcNAc...) asparagine) is linked at Asn207. Position 218–222 (218–222 (IDTDT)) interacts with NADP(+).

It belongs to the short-chain dehydrogenases/reductases (SDR) family. Homodimer. As to expression, abundantly expressed in the liver, followed by fibroblasts, also detected in the brain, lung, heart, and ovary, and in smaller amounts in kidney, skin, and spleen.

It is found in the endoplasmic reticulum membrane. It carries out the reaction an 11beta-hydroxysteroid + NADP(+) = an 11-oxosteroid + NADPH + H(+). It catalyses the reaction cortisone + NADPH + H(+) = cortisol + NADP(+). The catalysed reaction is corticosterone + NADP(+) = 11-dehydrocorticosterone + NADPH + H(+). The enzyme catalyses a 7beta-hydroxysteroid + NADP(+) = a 7-oxosteroid + NADPH + H(+). It carries out the reaction 7-oxocholesterol + NADPH + H(+) = 7beta-hydroxycholesterol + NADP(+). It catalyses the reaction chenodeoxycholate + NADP(+) = 7-oxolithocholate + NADPH + H(+). The catalysed reaction is 7-oxolithocholate + NADPH + H(+) = ursodeoxycholate + NADP(+). The enzyme catalyses glycochenodeoxycholate + NADP(+) = 7-oxoglycolithocholate + NADPH + H(+). It carries out the reaction taurochenodeoxycholate + NADP(+) = 7-oxotaurolithocholate + NADPH + H(+). It catalyses the reaction tauroursodeoxycholate + NADP(+) = 7-oxotaurolithocholate + NADPH + H(+). The catalysed reaction is glycoursodeoxycholate + NADP(+) = 7-oxoglycolithocholate + NADPH + H(+). The enzyme catalyses 7-oxopregnenolone + NADPH + H(+) = 7beta-hydroxypregnenolone + NADP(+). It carries out the reaction 3beta,7alpha-dihydroxyandrost-5-en-17-one + NADP(+) = 3beta-hydroxy-5-androstene-7,17-dione + NADPH + H(+). It catalyses the reaction 3beta-hydroxy-5-androstene-7,17-dione + NADPH + H(+) = 3beta,7beta-dihydroxyandrost-5-en-17-one + NADP(+). The catalysed reaction is 3beta-hydroxy-5alpha-androstane-7,17-dione + NADPH + H(+) = 3beta,7beta-dihydroxy-5alpha-androstan-17-one + NADP(+). Its pathway is steroid metabolism. Its function is as follows. Controls the reversible conversion of biologically active glucocorticoids such as cortisone to cortisol, and 11-dehydrocorticosterone to corticosterone in the presence of NADP(H). Participates in the corticosteroid receptor-mediated anti-inflammatory response, as well as metabolic and homeostatic processes. Bidirectional in vitro, predominantly functions as a reductase in vivo, thereby increasing the concentration of active glucocorticoids. It has broad substrate specificity, besides glucocorticoids, it accepts other steroid and sterol substrates. Interconverts 7-oxo- and 7-hydroxy-neurosteroids such as 7-oxopregnenolone and 7beta-hydroxypregnenolone, 7-oxodehydroepiandrosterone (3beta-hydroxy-5-androstene-7,17-dione) and 7beta-hydroxydehydroepiandrosterone (3beta,7beta-dihydroxyandrost-5-en-17-one), among others. Catalyzes the stereo-specific conversion of the major dietary oxysterol, 7-ketocholesterol (7-oxocholesterol), into the more polar 7-beta-hydroxycholesterol metabolite. 7-oxocholesterol is one of the most important oxysterols, it participates in several events such as induction of apoptosis, accumulation in atherosclerotic lesions, lipid peroxidation, and induction of foam cell formation. Mediates the 7-oxo reduction of 7-oxolithocholate mainly to chenodeoxycholate, and to a lesser extent to ursodeoxycholate, both in its free form and when conjugated to glycine or taurine, providing a link between glucocorticoid activation and bile acid metabolism. Catalyzes the synthesis of 7-beta-25-dihydroxycholesterol from 7-oxo-25-hydroxycholesterol in vitro, which acts as a ligand for the G-protein-coupled receptor (GPCR) Epstein-Barr virus-induced gene 2 (EBI2) and may thereby regulate immune cell migration. The polypeptide is 11-beta-hydroxysteroid dehydrogenase 1 (HSD11B1) (Saimiri sciureus (Common squirrel monkey)).